The chain runs to 800 residues: DNA topoisomerase 4 subunit A (800 aa).

Positions Leu-31–Glu-495 constitute a Topo IIA-type catalytic domain. The O-(5'-phospho-DNA)-tyrosine intermediate role is filled by Tyr-119.

It belongs to the type II topoisomerase GyrA/ParC subunit family. ParC type 2 subfamily. In terms of assembly, heterotetramer composed of ParC and ParE.

The protein localises to the cell membrane. It carries out the reaction ATP-dependent breakage, passage and rejoining of double-stranded DNA.. Its function is as follows. Topoisomerase IV is essential for chromosome segregation. It relaxes supercoiled DNA. Performs the decatenation events required during the replication of a circular DNA molecule. The polypeptide is DNA topoisomerase 4 subunit A (Staphylococcus aureus (strain MRSA252)).